Consider the following 351-residue polypeptide: Cardiolipin synthase (CMP-forming) (351 aa).

Residues 74 to 120 (PAPQLSASHQHQAQQQQQQTKQPQQPYDPQQDQVPSTSTASSSKPAA) form a disordered region. Residues 76–120 (PQLSASHQHQAQQQQQQTKQPQQPYDPQQDQVPSTSTASSSKPAA) show a composition bias toward low complexity. The next 5 membrane-spanning stretches (helical) occupy residues 139-159 (PLIGYWLVQGHYEAATLALAV), 191-211 (VLIGCVAAALLMNGAMPGWVA), 251-271 (AAAAGAATGAANGVASGGGGG), 280-300 (PLLISKANTVLQLLLLGGYLL), and 321-341 (LIMGLELATAATTVASGLAYG).

The protein belongs to the CDP-alcohol phosphatidyltransferase class-I family. Mn(2+) serves as cofactor.

The protein localises to the mitochondrion inner membrane. The catalysed reaction is a CDP-1,2-diacyl-sn-glycerol + a 1,2-diacyl-sn-glycero-3-phospho-(1'-sn-glycerol) = a cardiolipin + CMP + H(+). In terms of biological role, catalyzes the synthesis of cardiolipin (CL) (diphosphatidylglycerol) by specifically transferring a phosphatidyl group from CDP-diacylglycerol to phosphatidylglycerol (PG). CL is a key phospholipid in mitochondrial membranes and plays important roles in maintaining the functional integrity and dynamics of mitochondria under both optimal and stress conditions. Cannot catalyze the phosphatidyl group transfer from one PG molecule to another to form CL. This is Cardiolipin synthase (CMP-forming) from Chlamydomonas reinhardtii (Chlamydomonas smithii).